A 179-amino-acid chain; its full sequence is Molybdopterin synthase catalytic subunit (179 aa).

Residues 1–10 are compositionally biased toward polar residues; the sequence is MTTSEDQTTP. The disordered stretch occupies residues 1 to 21; that stretch reads MTTSEDQTTPAHLDPKTYPRH. Residues 127-128, Lys-143, and 150-152 each bind substrate; these read HR and KRE.

This sequence belongs to the MoaE family. MOCS2B subfamily. In terms of assembly, heterotetramer; composed of 2 small (MOCS2A) and 2 large (MOCS2B) subunits.

The protein resides in the cytoplasm. The catalysed reaction is 2 [molybdopterin-synthase sulfur-carrier protein]-C-terminal-Gly-aminoethanethioate + cyclic pyranopterin phosphate + H2O = molybdopterin + 2 [molybdopterin-synthase sulfur-carrier protein]-C-terminal Gly-Gly + 2 H(+). The protein operates within cofactor biosynthesis; molybdopterin biosynthesis. Its function is as follows. Catalytic subunit of the molybdopterin synthase complex, a complex that catalyzes the conversion of precursor Z into molybdopterin. Acts by mediating the incorporation of 2 sulfur atoms from thiocarboxylated MOCS2A into precursor Z to generate a dithiolene group. The polypeptide is Molybdopterin synthase catalytic subunit (Aspergillus oryzae (strain ATCC 42149 / RIB 40) (Yellow koji mold)).